A 402-amino-acid chain; its full sequence is Argininosuccinate synthase (402 aa).

Residue 9–17 coordinates ATP; sequence AYSGGLDTS. Y87 contributes to the L-citrulline binding site. G117 is a binding site for ATP. L-aspartate-binding residues include T119, N123, and D124. N123 contacts L-citrulline. L-citrulline contacts are provided by R127, S176, S185, E261, and Y273.

The protein belongs to the argininosuccinate synthase family. Type 1 subfamily. As to quaternary structure, homotetramer.

It localises to the cytoplasm. It catalyses the reaction L-citrulline + L-aspartate + ATP = 2-(N(omega)-L-arginino)succinate + AMP + diphosphate + H(+). It participates in amino-acid biosynthesis; L-arginine biosynthesis; L-arginine from L-ornithine and carbamoyl phosphate: step 2/3. This Chlorobium phaeobacteroides (strain BS1) protein is Argininosuccinate synthase.